The primary structure comprises 99 residues: Aspartyl/glutamyl-tRNA(Asn/Gln) amidotransferase subunit C (99 aa).

Belongs to the GatC family. As to quaternary structure, heterotrimer of A, B and C subunits.

It catalyses the reaction L-glutamyl-tRNA(Gln) + L-glutamine + ATP + H2O = L-glutaminyl-tRNA(Gln) + L-glutamate + ADP + phosphate + H(+). The enzyme catalyses L-aspartyl-tRNA(Asn) + L-glutamine + ATP + H2O = L-asparaginyl-tRNA(Asn) + L-glutamate + ADP + phosphate + 2 H(+). In terms of biological role, allows the formation of correctly charged Asn-tRNA(Asn) or Gln-tRNA(Gln) through the transamidation of misacylated Asp-tRNA(Asn) or Glu-tRNA(Gln) in organisms which lack either or both of asparaginyl-tRNA or glutaminyl-tRNA synthetases. The reaction takes place in the presence of glutamine and ATP through an activated phospho-Asp-tRNA(Asn) or phospho-Glu-tRNA(Gln). The protein is Aspartyl/glutamyl-tRNA(Asn/Gln) amidotransferase subunit C of Sulfurihydrogenibium sp. (strain YO3AOP1).